The following is a 224-amino-acid chain: Large ribosomal subunit protein uL3 (224 aa).

The interval 132–153 (SQTKTHGTHEYQRHPGAIGQRK) is disordered.

This sequence belongs to the universal ribosomal protein uL3 family. As to quaternary structure, part of the 50S ribosomal subunit. Forms a cluster with proteins L14 and L19.

In terms of biological role, one of the primary rRNA binding proteins, it binds directly near the 3'-end of the 23S rRNA, where it nucleates assembly of the 50S subunit. In Myxococcus xanthus (strain DK1622), this protein is Large ribosomal subunit protein uL3.